The chain runs to 463 residues: MTTETRSLYSQLPAIDRLLRDSSFLSLRDTYGHTRVVELLRQMLDEAREMIRDSQTLPAWCENWAQEVDARLTKEAQSALRPVINLTGTVLHTNLGRALQAEAAVEAVTKAMRSPVTLEYDLDDAGRGHRDRALAQLLCRITGAEDACIVNNNAAAVLLMLAATASGKEVVVSRGELVEIGGAFRIPDVMRQAGCTLHEVGTTNRTHAKDYRQAVNENTALLMKVHTSNYSIQGFTKAIDEAELVALGKELDVPVVTDLGSGSLVDLSQYGLPKEPMPQELIAAGVSLVSFSGDKLLGGPQAGIIVGKKEMIARLQSHPLKRALRADKMTLAALEATLRLYLHPEALSEKLPTLRLLTRSAEVIQIQAQRLQAPLAAHYGAEFAVQVMPCLSQIGSGSLPVDRLPSAALTFTPHDGRGSHLESLAARWRELPVPVIGRIYDGRLWLDLRCLEDEQRFLEMLLK.

K295 is modified (N6-(pyridoxal phosphate)lysine).

It belongs to the SelA family. In terms of assembly, homodecamer; pentamer of dimers. Binds only one seryl-tRNA(Sec) per dimer. Requires pyridoxal 5'-phosphate as cofactor.

It localises to the cytoplasm. The catalysed reaction is L-seryl-tRNA(Sec) + selenophosphate + H(+) = L-selenocysteinyl-tRNA(Sec) + phosphate. It functions in the pathway aminoacyl-tRNA biosynthesis; selenocysteinyl-tRNA(Sec) biosynthesis; selenocysteinyl-tRNA(Sec) from L-seryl-tRNA(Sec) (bacterial route): step 1/1. Functionally, converts seryl-tRNA(Sec) to selenocysteinyl-tRNA(Sec) required for selenoprotein biosynthesis. The polypeptide is L-seryl-tRNA(Sec) selenium transferase (Escherichia coli O127:H6 (strain E2348/69 / EPEC)).